Reading from the N-terminus, the 876-residue chain is Inter-alpha-trypsin inhibitor heavy chain H3 (876 aa).

An N-terminal signal peptide occupies residues 1–18 (MVALSHLGSALQLGSLWG). Residues 19–31 (FPRSPFRLLGKRS) constitute a propeptide that is removed on maturation. In terms of domain architecture, VIT spans 26–155 (LLGKRSLPEG…KVTFELTYEE (130 aa)). Asparagine 88 carries an N-linked (GlcNAc...) asparagine glycan. Residues 281–464 (NVAFVIDISG…LQLQGFYEEV (184 aa)) form the VWFA domain. Asparagine 577 carries N-linked (GlcNAc...) asparagine glycosylation. Aspartate 637 carries the aspartate 1-(chondroitin 4-sulfate)-ester modification. A propeptide spanning residues 638–876 (PHFIIQVPEK…HTDYIVPNLF (239 aa)) is cleaved from the precursor.

It belongs to the ITIH family. I-alpha-I plasma protease inhibitors are assembled from one or two heavy chains (HC) and one light chain, bikunin. Pre-alpha-inhibitor (P-alpha-I) is composed of ITIH3/HC3 and bikunin. In terms of processing, heavy chains are linked to bikunin via chondroitin 4-sulfate esterified to the alpha-carboxyl of the C-terminal aspartate after propeptide cleavage.

The protein resides in the secreted. Its function is as follows. May act as a carrier of hyaluronan in serum or as a binding protein between hyaluronan and other matrix protein, including those on cell surfaces in tissues to regulate the localization, synthesis and degradation of hyaluronan which are essential to cells undergoing biological processes. The sequence is that of Inter-alpha-trypsin inhibitor heavy chain H3 (ITIH3) from Pongo abelii (Sumatran orangutan).